The primary structure comprises 308 residues: Putative hydrolase MT0526 (308 aa).

Residues 1–48 are disordered; the sequence is MMVSSHLGSPDQAGHVDLASPADPPPPDASASHSPVDMPAPVAAAGSD. D62 functions as the Nucleophile in the catalytic mechanism. Mg(2+) contacts are provided by D62, D64, and D237. D64 (proton donor) is an active-site residue.

The protein belongs to the HAD-like hydrolase superfamily. SerB family. The cofactor is Mg(2+).

This chain is Putative hydrolase MT0526, found in Mycobacterium tuberculosis (strain CDC 1551 / Oshkosh).